A 451-amino-acid polypeptide reads, in one-letter code: Tapasin-related protein (451 aa).

An N-terminal signal peptide occupies residues 1–20; that stretch reads MGLEPSWYLLLCLAVSGAAG. Over 21–412 the chain is Lumenal; that stretch reads TDPPTAPTTA…RVLPNPEQRG (392 aa). Residues 196-301 enclose the Ig-like V-type domain; sequence FQVTSETQTL…TSLYQAQQIM (106 aa). 2 disulfide bridges follow: cysteine 217–cysteine 288 and cysteine 326–cysteine 387. Residues asparagine 270 and asparagine 277 are each glycosylated (N-linked (GlcNAc...) asparagine). The Ig-like C1-type domain maps to 302–399; the sequence is PLNILAPPKI…AHVSLEEPLT (98 aa). The chain crosses the membrane as a helical span at residues 413–433; the sequence is TLGVIFASIIFLSALLLFLGL. Residues 434–451 lie on the Cytoplasmic side of the membrane; sequence HRQQASSSRSTRPMRHSG.

As to quaternary structure, interacts with peptide-free HLA-A*02-B2M complexes or those loaded with low affinity peptides, likely facilitating peptide exchange onto higher affinity peptides. Interacts with MR1 in a ligand-independent way; this interaction may stabilize MR1 pool and facilitate ligand loading and dissociation. As to expression, widely expressed.

It localises to the cell membrane. It is found in the endoplasmic reticulum membrane. Its subcellular location is the microsome membrane. The protein localises to the golgi apparatus membrane. In terms of biological role, component of the antigen processing and presentation pathway, which binds to MHC class I coupled with beta2-microglobulin/B2M. Association between TAPBPR and MHC class I occurs in the absence of a functional peptide-loading complex (PLC). Expression seems to slow down and down-regulate MHC class I surface expression. The chain is Tapasin-related protein (Tapbpl) from Mus musculus (Mouse).